The chain runs to 382 residues: Protein NASP homolog 1 (382 aa).

The tract at residues 1–39 (MDTENIADASDIRVKDASGDSDEKGNGTTTEEETVEQKE) is disordered. A compositionally biased stretch (basic and acidic residues) spans 10 to 25 (SDIRVKDASGDSDEKG). The stretch at 42–75 (LAELLAAGRRALKVNDIDKASDSLSEATELSSEI) is one TPR 1 repeat. Residues 103–112 (QLLKGPGEKE) show a composition bias toward basic and acidic residues. Residues 103-151 (QLLKGPGEKESGDEEQAGNSDDKTDEENGETEKEDGEESGEEEDDDDDT) form a disordered region. A compositionally biased stretch (acidic residues) spans 125 to 150 (KTDEENGETEKEDGEESGEEEDDDDD). 2 TPR repeats span residues 191-224 (ADVL…QRNV) and 233-266 (AQTY…LIAR). Residues 264-304 (IARQTELKHELERGVDDKEKKSEFENELKELEEMMPGVEEM) adopt a coiled-coil conformation. A disordered region spans residues 337 to 382 (PQEAGDQKEANDISSLVRRPAKRAVDAPTDNQAVKKEKEEEGTTSI). Positions 369 to 382 (AVKKEKEEEGTTSI) are enriched in basic and acidic residues.

This sequence belongs to the NASP family. May interact with zinc finger protein tra-4 and histone deacetylase hda-1.

It is found in the nucleus. Functionally, promotes normal hermaphrodite (XX) development, in concert with zinc finger protein tra-4 and histone deacetylase hda-1, perhaps as components of a complex. May act redundantly with nasp-2. Involved in innate immune response to B.thuringiensis strain DB27 and S.aureus bacteria. May play a role in the uptake or spreading of dsRNA. The polypeptide is Protein NASP homolog 1 (Caenorhabditis elegans).